A 303-amino-acid polypeptide reads, in one-letter code: Recombination-associated protein RdgC (303 aa).

Belongs to the RdgC family.

It localises to the cytoplasm. It is found in the nucleoid. May be involved in recombination. The sequence is that of Recombination-associated protein RdgC from Yersinia enterocolitica serotype O:8 / biotype 1B (strain NCTC 13174 / 8081).